The primary structure comprises 268 residues: Proenkephalin-A (268 aa).

The N-terminal stretch at 1 to 24 (MARFLRLCTWLLALGSCLLATVQA) is a signal peptide. 3 cysteine pairs are disulfide-bonded: Cys-26–Cys-48, Cys-30–Cys-52, and Cys-33–Cys-65. Residues 163 to 184 (TGDNRAKDSHQQESTNNDEDMS) are disordered. 2 propeptides span residues 197–208 (SPQLEDEAKELQ) and 218–228 (VGRPEWWMDYQ). Ser-252 is subject to Phosphoserine.

It belongs to the opioid neuropeptide precursor family. Post-translationally, proenkephalin-A is cleaved by CTSL to generate Met-enkephalin. In terms of processing, processed and degraded by ACE. Probably cleaved by ACE. Post-translationally, processed by ACE to generate Met-enkephalin in the nucleus accumbens of the brain. In terms of processing, the N-terminal domain contains 6 conserved cysteines thought to be involved in disulfide bonding and/or processing. In terms of tissue distribution, spermatogenic and somatic cells.

The protein localises to the cytoplasmic vesicle. It is found in the secretory vesicle. Its subcellular location is the chromaffin granule lumen. The protein resides in the secreted. In terms of biological role, neuropeptide that competes with and mimic the effects of opiate drugs. They play a role in a number of physiologic functions, including pain perception and responses to stress. Its function is as follows. Met-enkephalin-Arg-Phe neuropeptide acts as a strong ligand of Mu-type opioid receptor OPRM1. Met-enkephalin-Arg-Phe-binding to OPRM1 in the nucleus accumbens of the brain increases activation of OPRM1, leading to long-term synaptic depression of glutamate release. Increases glutamate release in the striatum and decreases GABA concentration in the striatum. Functionally, increases glutamate release in the striatum. This chain is Proenkephalin-A (Penk), found in Mus musculus (Mouse).